A 1289-amino-acid chain; its full sequence is uncharacterized protein (1289 aa).

The N-terminal stretch at 1 to 23 is a signal peptide; it reads MRKYTVIASILLSFLSVLSGGHH. An LTD domain is found at 141-277; the sequence is EGYQADLAHI…VVISTNTGKD (137 aa).

This is an uncharacterized protein from Bacillus subtilis (strain 168).